We begin with the raw amino-acid sequence, 196 residues long: ATP-dependent Clp protease proteolytic subunit (196 aa).

S96 serves as the catalytic Nucleophile. Residue H121 is part of the active site.

The protein belongs to the peptidase S14 family. Fourteen ClpP subunits assemble into 2 heptameric rings which stack back to back to give a disk-like structure with a central cavity, resembling the structure of eukaryotic proteasomes.

The protein resides in the cytoplasm. It catalyses the reaction Hydrolysis of proteins to small peptides in the presence of ATP and magnesium. alpha-casein is the usual test substrate. In the absence of ATP, only oligopeptides shorter than five residues are hydrolyzed (such as succinyl-Leu-Tyr-|-NHMec, and Leu-Tyr-Leu-|-Tyr-Trp, in which cleavage of the -Tyr-|-Leu- and -Tyr-|-Trp bonds also occurs).. Functionally, cleaves peptides in various proteins in a process that requires ATP hydrolysis. Has a chymotrypsin-like activity. Plays a major role in the degradation of misfolded proteins. This Streptococcus pneumoniae (strain ATCC 700669 / Spain 23F-1) protein is ATP-dependent Clp protease proteolytic subunit.